The chain runs to 397 residues: Carbamoyl phosphate synthase small chain (397 aa).

Residues 1 to 204 (MKHVLRKEKT…NAKLKEKIWH (204 aa)) form a CPSase region. Residues Ser-57, Gly-252, and Gly-254 each coordinate L-glutamine. Residues 204–391 (HVVVYDFGVK…IKLMKKSYNS (188 aa)) enclose the Glutamine amidotransferase type-1 domain. The active-site Nucleophile is Cys-280. 4 residues coordinate L-glutamine: Leu-281, Gln-284, Asn-322, and Tyr-325. Active-site residues include His-364 and Glu-366.

The protein belongs to the CarA family. Composed of two chains; the small (or glutamine) chain promotes the hydrolysis of glutamine to ammonia, which is used by the large (or ammonia) chain to synthesize carbamoyl phosphate. Tetramer of heterodimers (alpha,beta)4.

The catalysed reaction is hydrogencarbonate + L-glutamine + 2 ATP + H2O = carbamoyl phosphate + L-glutamate + 2 ADP + phosphate + 2 H(+). It catalyses the reaction L-glutamine + H2O = L-glutamate + NH4(+). It participates in amino-acid biosynthesis; L-arginine biosynthesis; carbamoyl phosphate from bicarbonate: step 1/1. Its pathway is pyrimidine metabolism; UMP biosynthesis via de novo pathway; (S)-dihydroorotate from bicarbonate: step 1/3. Functionally, small subunit of the glutamine-dependent carbamoyl phosphate synthetase (CPSase). CPSase catalyzes the formation of carbamoyl phosphate from the ammonia moiety of glutamine, carbonate, and phosphate donated by ATP, constituting the first step of 2 biosynthetic pathways, one leading to arginine and/or urea and the other to pyrimidine nucleotides. The small subunit (glutamine amidotransferase) binds and cleaves glutamine to supply the large subunit with the substrate ammonia. The sequence is that of Carbamoyl phosphate synthase small chain from Buchnera aphidicola subsp. Baizongia pistaciae (strain Bp).